We begin with the raw amino-acid sequence, 488 residues long: Membrane-bound lytic murein transglycosylase F (488 aa).

A signal peptide spans 1 to 25; sequence MFARPAIRMRCATGLLAIGTLLMLA. Residues 26–269 are non-LT domain; it reads GCGEEPKPSV…RLKERYYGHV (244 aa). The interval 270–488 is LT domain; it reads DVLGYVGAYT…RTLDEQTPPL (219 aa). Residue Glu316 is part of the active site.

This sequence in the N-terminal section; belongs to the bacterial solute-binding protein 3 family. The protein in the C-terminal section; belongs to the transglycosylase Slt family.

It localises to the cell outer membrane. It carries out the reaction Exolytic cleavage of the (1-&gt;4)-beta-glycosidic linkage between N-acetylmuramic acid (MurNAc) and N-acetylglucosamine (GlcNAc) residues in peptidoglycan, from either the reducing or the non-reducing ends of the peptidoglycan chains, with concomitant formation of a 1,6-anhydrobond in the MurNAc residue.. Murein-degrading enzyme that degrades murein glycan strands and insoluble, high-molecular weight murein sacculi, with the concomitant formation of a 1,6-anhydromuramoyl product. Lytic transglycosylases (LTs) play an integral role in the metabolism of the peptidoglycan (PG) sacculus. Their lytic action creates space within the PG sacculus to allow for its expansion as well as for the insertion of various structures such as secretion systems and flagella. The polypeptide is Membrane-bound lytic murein transglycosylase F (Ectopseudomonas mendocina (strain ymp) (Pseudomonas mendocina)).